We begin with the raw amino-acid sequence, 435 residues long: MTAKWEKTGTNEGKLTFEVGTDKIKEGVDKAFDRTKKQLNVPGFRKGHVPRQIFNKMYGEEALYQDALNIVLPEAYEAAIKEAGIEPVDQPQVDVESMEKGEAWVLSAIVTVKPEVKLGEYKGVKVIKQSTRVTSKEVDEEIEKKREQQAELVLKEGKPAENGDTVTIDFDGSVDGVAFDGGKADNYDLVLGSNSFIPGFEDQLIGHNTDEDVDVNVTFPDDYQAEDLQGKDALFKVKIHEIKTKELPELDDEFAKDVDEDVDSLEDLKVKTKEEIKSRKIQAASDAKETEAVQAAVDNAEIAEIPEAMLNEDVDRQVNQYLANMQQQGISPEMYFQLTGSSEDQLRDQLREGAENRVKTTLVLEAIVEAEKIDPSDDEVAAEIKDLAEQYGMEEKAVRSALSEDMIKHDVAIKSAVELIKDSAIEEPKSKAAKK.

The PPIase FKBP-type domain occupies 163-248 (GDTVTIDFDG…IHEIKTKELP (86 aa)).

It belongs to the FKBP-type PPIase family. Tig subfamily.

Its subcellular location is the cytoplasm. The catalysed reaction is [protein]-peptidylproline (omega=180) = [protein]-peptidylproline (omega=0). In terms of biological role, involved in protein export. Acts as a chaperone by maintaining the newly synthesized protein in an open conformation. Functions as a peptidyl-prolyl cis-trans isomerase. This Pediococcus pentosaceus (strain ATCC 25745 / CCUG 21536 / LMG 10740 / 183-1w) protein is Trigger factor.